The primary structure comprises 448 residues: B-cell lymphoma 3 protein homolog (448 aa).

The segment at 1–54 is disordered; that stretch reads MPRCPAGAMDEGPVDLRTRPKGTPGAALPLRKRPLRPASPEPATTRSPAGPLDA. At Ser-39 the chain carries Phosphoserine. ANK repeat units follow at residues 129-161, 166-195, 199-228, 236-265, 270-299, 303-332, and 333-362; these read DGDT…REVD, LRQT…SPMA, HGQT…SGSV, EGLT…DIDA, SGRS…NVNA, SGSS…DSGL, and KNCH…RAAS. Positions 356 to 448 are disordered; the sequence is KASRAASGSQ…VPPSPAPGSS (93 aa). Residues 361-376 show a composition bias toward polar residues; sequence ASGSQPEPSPDQSATN. Position 369 is a phosphoserine (Ser-369). The span at 377–398 shows a compositional bias: low complexity; it reads SPESSSRLSSNGLQSSPSSSPS. 2 positions are modified to phosphoserine; by GSK3: Ser-396 and Ser-400. The span at 411-423 shows a compositional bias: polar residues; sequence TPQNFFLPTTSTP. The segment covering 425-436 has biased composition (low complexity); the sequence is FLPFPGVLRGPG. Residues 437-448 are compositionally biased toward pro residues; that stretch reads RPVPPSPAPGSS.

In terms of assembly, component of a complex consisting of the NF-kappa-B p52-p52 homodimer and BCL3. Component of a complex consisting of the NF-kappa-B p50-p50 homodimer and BCL3. Interacts with N4BP2, COPS5 and PIR. Interacts with CYLD. Post-translationally, polyubiquitinated. Ubiquitination via 'Lys-63'-linked ubiquitin chains is required for nuclear accumulation. Deubiquitinated by CYLD, which acts on 'Lys-63'-linked ubiquitin chains. Deubiquitination by CYLD prevents nuclear accumulation. Activated by phosphorylation.

Its subcellular location is the nucleus. It localises to the cytoplasm. The protein localises to the perinuclear region. In terms of biological role, contributes to the regulation of transcriptional activation of NF-kappa-B target genes. In the cytoplasm, inhibits the nuclear translocation of the NF-kappa-B p50 subunit. In the nucleus, acts as a transcriptional activator that promotes transcription of NF-kappa-B target genes. Contributes to the regulation of cell proliferation. This Mus musculus (Mouse) protein is B-cell lymphoma 3 protein homolog (Bcl3).